An 886-amino-acid chain; its full sequence is Desmocollin-1 (886 aa).

Positions 1–29 (MAVACAAPGSTFSKQLLFFLLVLVLFCDA) are cleaved as a signal peptide. The propeptide occupies 30 to 134 (CQKVSLHVPS…KEPVHNRSKR (105 aa)). 2 N-linked (GlcNAc...) asparagine glycosylation sites follow: Asn130 and Asn165. Cadherin domains follow at residues 135–242 (RWAP…APYF), 243–354 (ETKL…SPYF), 355–471 (TQTS…GPEC), 472–575 (QPPV…DHPP), and 576–682 (QIDK…EERD). Over 135-691 (RWAPIPCSLM…DAKPNIILGK (557 aa)) the chain is Extracellular. A Phosphothreonine modification is found at Thr385. Residue Asn546 is glycosylated (N-linked (GlcNAc...) (high mannose) asparagine). The N-linked (GlcNAc...) asparagine glycan is linked to Asn613. A helical membrane pass occupies residues 692–714 (WAILAMVLGSALLLCILFTCFCV). The Cytoplasmic segment spans residues 715-886 (TTTKRTVKKC…RTLAKTCVKK (172 aa)).

As to quaternary structure, binds to JUP/plakoglobin. Expressed in the epidermis and inner root sheaths of hair follicles (at protein level).

The protein localises to the cell membrane. The protein resides in the cell junction. Its subcellular location is the desmosome. A component of desmosome cell-cell junctions which are required for positive regulation of cellular adhesion. Required for desmosome adhesion strength between the granular layers of the epidermis, as a result moderates epidermal proliferation and differentiation. Is therefore required to maintain postnatal epidermal barrier function and normal hair follicle morphology into adulthood. In Mus musculus (Mouse), this protein is Desmocollin-1 (Dsc1).